A 228-amino-acid chain; its full sequence is Cytidylate kinase (228 aa).

12 to 20 (GPASAGKST) contacts ATP.

The protein belongs to the cytidylate kinase family. Type 1 subfamily.

It is found in the cytoplasm. It carries out the reaction CMP + ATP = CDP + ADP. It catalyses the reaction dCMP + ATP = dCDP + ADP. This Lactiplantibacillus plantarum (strain ATCC BAA-793 / NCIMB 8826 / WCFS1) (Lactobacillus plantarum) protein is Cytidylate kinase.